Consider the following 442-residue polypeptide: GTPase Der (442 aa).

2 consecutive EngA-type G domains span residues Arg2–Asn167 and Phe175–Met351. GTP contacts are provided by residues Gly8 to Ser15, Asp55 to Ile59, Asn119 to Glu122, Gly181 to Ser188, Asp228 to Ile232, and Asn293 to Asp296. The KH-like domain occupies Arg352–Asn436.

This sequence belongs to the TRAFAC class TrmE-Era-EngA-EngB-Septin-like GTPase superfamily. EngA (Der) GTPase family. As to quaternary structure, associates with the 50S ribosomal subunit.

In terms of biological role, GTPase that plays an essential role in the late steps of ribosome biogenesis. The sequence is that of GTPase Der from Ureaplasma parvum serovar 3 (strain ATCC 27815 / 27 / NCTC 11736).